The chain runs to 488 residues: Glutamyl-tRNA(Gln) amidotransferase subunit A, mitochondrial (488 aa).

Residues K62 and S140 each act as charge relay system in the active site. The active-site Acyl-ester intermediate is the S164. The segment at 205 to 228 (GHDDNDPTSITPQTRERIQDRLSR) is disordered. The span at 218-227 (TRERIQDRLS) shows a compositional bias: basic and acidic residues.

It belongs to the amidase family. GatA subfamily. Subunit of the heterotrimeric GatCAB amidotransferase (AdT) complex, composed of A, B and C subunits.

The protein localises to the mitochondrion. It carries out the reaction L-glutamyl-tRNA(Gln) + L-glutamine + ATP + H2O = L-glutaminyl-tRNA(Gln) + L-glutamate + ADP + phosphate + H(+). Its function is as follows. Allows the formation of correctly charged Gln-tRNA(Gln) through the transamidation of misacylated Glu-tRNA(Gln) in the mitochondria. The reaction takes place in the presence of glutamine and ATP through an activated gamma-phospho-Glu-tRNA(Gln). This Tuber melanosporum (strain Mel28) (Perigord black truffle) protein is Glutamyl-tRNA(Gln) amidotransferase subunit A, mitochondrial.